We begin with the raw amino-acid sequence, 239 residues long: Ribose-5-phosphate isomerase A (239 aa).

Substrate contacts are provided by residues 34–37, 94–97, and 107–110; these read TGST, DGAD, and KGGG. Glu116 functions as the Proton acceptor in the catalytic mechanism. A substrate-binding site is contributed by Lys134.

The protein belongs to the ribose 5-phosphate isomerase family. In terms of assembly, homodimer.

It catalyses the reaction aldehydo-D-ribose 5-phosphate = D-ribulose 5-phosphate. It functions in the pathway carbohydrate degradation; pentose phosphate pathway; D-ribose 5-phosphate from D-ribulose 5-phosphate (non-oxidative stage): step 1/1. Its function is as follows. Catalyzes the reversible conversion of ribose-5-phosphate to ribulose 5-phosphate. The polypeptide is Ribose-5-phosphate isomerase A (Treponema denticola (strain ATCC 35405 / DSM 14222 / CIP 103919 / JCM 8153 / KCTC 15104)).